A 200-amino-acid chain; its full sequence is Rho-related protein racH (200 aa).

11-18 serves as a coordination point for GTP; that stretch reads GDMSVGKT. The short motif at 33–41 is the Effector region element; sequence YVPTVFDNY. Residues 58–62 and 117–120 each bind GTP; these read DTAGS and TKLD. Residues 178 to 200 form a disordered region; sequence EELAKSKKDSKKGDKDSKDCIIQ. A Cysteine methyl ester modification is found at Cys-197. Cys-197 carries the S-geranylgeranyl cysteine lipid modification. A propeptide spans 198-200 (removed in mature form); it reads IIQ.

Belongs to the small GTPase superfamily. Rho family.

Its subcellular location is the cell membrane. In Dictyostelium discoideum (Social amoeba), this protein is Rho-related protein racH (racH).